Consider the following 302-residue polypeptide: Putative peptide permease protein BOV_A0350 (302 aa).

A disordered region spans residues 1–22 (MRSSIHASRLRKMGQSIPASTG). 6 consecutive transmembrane segments (helical) span residues 38–58 (IFGLVLLTPLLFAVLTYPLWL), 101–121 (LLVAVSSVVLSTAIGFLIGAI), 147–167 (IFLLVLASIIGSGIWSTVVVI), 200–222 (AGLGHLLFRHGLPNSIDILVVYA), 230–250 (ILLEAGLSFLGLGVPPPAASW), and 268–288 (WQWLFPGGALVLAVLAINFIG). The ABC transmembrane type-1 domain occupies 97–288 (GRISLLVAVS…LAVLAINFIG (192 aa)).

The protein belongs to the binding-protein-dependent transport system permease family. In terms of assembly, the complex is composed of two ATP-binding proteins (BOV_A0347 and BOV_A0348), two transmembrane proteins (BOV_A0350 and BOV_A0351) and a solute-binding protein (BOV_A0352).

The protein localises to the cell inner membrane. Its function is as follows. Probably part of an ABC transporter complex that could be involved in peptide import. Probably responsible for the translocation of the substrate across the membrane. The sequence is that of Putative peptide permease protein BOV_A0350 from Brucella ovis (strain ATCC 25840 / 63/290 / NCTC 10512).